Consider the following 785-residue polypeptide: Formin-like protein 3 (785 aa).

The first 20 residues, 1-20, serve as a signal peptide directing secretion; it reads MGRLRLAFLAISLVVFVCVS. The interval 96-145 is disordered; the sequence is YDWLAPASSPNEPPAETPDESSPSPSEETPSVVAPSQSVPGPPRPPPQRE. Over residues 115–134 the composition is skewed to low complexity; that stretch reads ESSPSPSEETPSVVAPSQSV. Residues 154 to 174 form a helical membrane-spanning segment; it reads LIIAVASTAVLTFVFVALMFL. Disordered stretches follow at residues 184–228, 241–329, and 730–785; these read AVGS…KKRS, EFST…APKT, and ETTK…SSPS. Residues 201 to 223 are compositionally biased toward polar residues; sequence STGSTENSPTVASTSRKMFSVAS. A compositionally biased stretch (pro residues) spans 256–303; sequence LKLPPGRSAPPPPPAAAPPPQPPPPPPPKPQPPPPPKIARPPPAPPKG. The 427-residue stretch at 321-747 folds into the FH2 domain; the sequence is DSETGAPKTK…SGKKESEMTT (427 aa). The segment covering 745–754 has biased composition (polar residues); that stretch reads MTTSDSNQPS. Positions 773–785 are enriched in acidic residues; it reads SDDSDDEEDSSPS.

It belongs to the formin-like family. Class-I subfamily.

It localises to the membrane. Its function is as follows. Acts as actin nucleation factor that directs the formation of actin cables and polarized growth in pollen tubes. This chain is Formin-like protein 3 (FH3), found in Arabidopsis thaliana (Mouse-ear cress).